Consider the following 299-residue polypeptide: MKTGFVALAGKPNVGKSSLVNAIVGRKVLIVSDKPQTTRNRINVIHTTNDFQVIFVDTPGIHKPLYRLGEYMVKAAVSALKGVDLILTVIDAKEGIGKPEAFVFDYVNQSNTKTIGVINKIDLVGTEKVETLQKIMEEKLTNCISIVKTSATRNEGTKELLDLIIENLPEGPQYYPEDMVTDRPLSFMVSEIVREKIFHFTYEEIPHSVAVIVEEIKERDNGILYIRANIYVDRNSQKGIIIGNKGTMIKKIGQNARQEIEYLVGGKVFLDLHVKVKRNWRDKDFIILNEIGMKDDIRR.

The region spanning 2–170 (KTGFVALAGK…LDLIIENLPE (169 aa)) is the Era-type G domain. The G1 stretch occupies residues 10–17 (GKPNVGKS). 10 to 17 (GKPNVGKS) is a binding site for GTP. The segment at 36 to 40 (QTTRN) is G2. A G3 region spans residues 57-60 (DTPG). Residues 57-61 (DTPGI) and 119-122 (NKID) contribute to the GTP site. The interval 119-122 (NKID) is G4. The G5 stretch occupies residues 149-151 (TSA). One can recognise a KH type-2 domain in the interval 201-278 (TYEEIPHSVA…FLDLHVKVKR (78 aa)).

The protein belongs to the TRAFAC class TrmE-Era-EngA-EngB-Septin-like GTPase superfamily. Era GTPase family. As to quaternary structure, monomer.

The protein resides in the cytoplasm. Its subcellular location is the cell inner membrane. In terms of biological role, an essential GTPase that binds both GDP and GTP, with rapid nucleotide exchange. Plays a role in 16S rRNA processing and 30S ribosomal subunit biogenesis and possibly also in cell cycle regulation and energy metabolism. This chain is GTPase Era, found in Thermosipho melanesiensis (strain DSM 12029 / CIP 104789 / BI429).